The chain runs to 367 residues: Alanine racemase (367 aa).

Lys40 functions as the Proton acceptor; specific for D-alanine in the catalytic mechanism. At Lys40 the chain carries N6-(pyridoxal phosphate)lysine. Arg136 lines the substrate pocket. The active-site Proton acceptor; specific for L-alanine is Tyr263. Met310 lines the substrate pocket.

Belongs to the alanine racemase family. The cofactor is pyridoxal 5'-phosphate.

It catalyses the reaction L-alanine = D-alanine. Its pathway is amino-acid biosynthesis; D-alanine biosynthesis; D-alanine from L-alanine: step 1/1. In terms of biological role, catalyzes the interconversion of L-alanine and D-alanine. May also act on other amino acids. In Streptococcus pneumoniae (strain Taiwan19F-14), this protein is Alanine racemase (alr).